Here is a 316-residue protein sequence, read N- to C-terminus: MAVMPPPNSVNGSERRYLEDGIWQHGRFYGSWKPGKYLFPIDSEELNRLDIFHKVFLLARDNKPFQAPIQRKAPRMMDIGTGTGIWPINVAEECFTDAQIMAVDLNQILPALIPPGVLPKQYDIEEPTWDSLYTDCDFIHMRMLLGSIQTDLWPQVYRNIFEHLAPGIGHLEHIEVDWTPRCDDDERPANSAFEKWAELFFDGMDRFNRIARVVPQETRQLLEATGFTDVKQEMIRAYVCPWSSDRQEREIARWFNIGLSHSLESLSLKPLVEKLGWKPEDVRKLCTTAKRETCVLRFHTYCNIYVWTARKPGPPQ.

The protein belongs to the methyltransferase superfamily. LaeA methyltransferase family. In terms of assembly, component of the heterotrimeric velvet complex composed of laeA, ve1 and velB; Ve1 acting as a bridging protein between laeA and velB. Interacts directly with veA.

The protein localises to the nucleus. It is found in the cytoplasm. The enzyme catalyses L-methionyl-[protein] + S-adenosyl-L-methionine = S-methyl-L-methionyl-[protein] + S-adenosyl-L-homocysteine. Functionally, methyltransferase that performs automethylation. No other methyl-accepting substrate has been identified yet. Component of the velvet transcription factor complex that acts as a global regulator for secondary metabolite gene expression. Controls the expression of the mycotoxins trichothecenes and zearalenon gene clusters. Negatively controls perithecial induction, but positively controls virulence toward the host plant. The sequence is that of Secondary metabolism regulator laeA from Gibberella zeae (strain ATCC MYA-4620 / CBS 123657 / FGSC 9075 / NRRL 31084 / PH-1) (Wheat head blight fungus).